Here is a 437-residue protein sequence, read N- to C-terminus: MKAFRSLRILISISRTTTKTTPRNPHQAQNFLRRFYSAQPNLDEPTSINEDGSSSDSVFDSSQYPIDDSNVDSVKKPKEATWDKGYRERVNKAFFGNLTEKGKVKVAEEESSEDDEDSVDRSRILAKALLEAALESPDEELGEGEVREEDQKSLNVGIIGPPNAGKSSLTNFMVGTKVAAASRKTNTTTHEVLGVLTKGDTQVCFFDTPGLMLKKSGYGYKDIKARVQNAWTSVDLFDVLIVMFDVHRHLMSPDSRVVRLIKYMGEEENPKQKRVLCMNKVDLVEKKKDLLKVAEEFQDLPAYERYFMISGLKGSGVKDLSQYLMDQAVKKPWEEDAFTMSEEVLKNISLEVVRERLLDHVHQEIPYGLEHRLVDWKELRDGSLRIEQHLITPKLSQRKILVGKGGCKIGRIGIEANEELRRIMNRKVHLILQVKLK.

Over residues 39–50 (QPNLDEPTSINE) the composition is skewed to polar residues. Residues 39–65 (QPNLDEPTSINEDGSSSDSVFDSSQYP) are disordered. Positions 51–62 (DGSSSDSVFDSS) are enriched in low complexity. A phosphoserine mark is found at S111 and S112. One can recognise an Era-type G domain in the interval 152–333 (KSLNVGIIGP…LMDQAVKKPW (182 aa)). The interval 160 to 167 (GPPNAGKS) is G1. Residue 160–167 (GPPNAGKS) participates in GTP binding. The segment at 186–190 (NTTTH) is G2. Residues 207–210 (DTPG) are G3. GTP contacts are provided by residues 207-211 (DTPGL) and 279-282 (NKVD). Positions 279–282 (NKVD) are G4. The interval 309-311 (ISG) is G5. One can recognise a KH type-2 domain in the interval 361-437 (VHQEIPYGLE…VHLILQVKLK (77 aa)).

It belongs to the TRAFAC class TrmE-Era-EngA-EngB-Septin-like GTPase superfamily. Era GTPase family.

Its function is as follows. Has a crucial role in plant growth and development, possibly by influencing mitochondrial division. This chain is GTP-binding protein ERG (ERG), found in Arabidopsis thaliana (Mouse-ear cress).